The following is a 123-amino-acid chain: Transmembrane protein 254 (123 aa).

A2 carries the post-translational modification N-acetylalanine. A run of 3 helical transmembrane segments spans residues 15-35 (LFWF…VFWP), 61-81 (LCNG…YAIV), and 95-115 (LLWF…LIAY).

The protein localises to the membrane. This Homo sapiens (Human) protein is Transmembrane protein 254 (TMEM254).